Here is a 543-residue protein sequence, read N- to C-terminus: MTKSNGEDPRAGSRMERFQQGVRQRTLLAKKKVQNITKDDVKGFLKRNGFVLFTVIAVVVGSILGFSVRSYHMTFRELKYFSFPGELLMRMLQMLVLPLIVSSLVTGMAALDSKASGKMGLRAVVYYMTTTVIAVFIGIVIVIIVHPGKGTKEHMHREGKIEPVTAADAFLDLIRNMFPPNMVEACFKQFKTSYEKKIFKVTMPANETAVMTSVLNNVSEAMETLTKMREEMIPVPGAVNGVNALGLVVFSMCFGLVIGNMKEQGKALKDFFDSLNEAIMRLVAVIMWYAPIGILFLIAGKIAEMEDMGVVGGQLGMYTVTVIIGLLIHAVIVLPLLYFAVTRKNPWVFIGGILQALITALGTSSSSATLPITFKCLEENNKVDKRVTRFVLPVGATINMDGTALYEALAAIFIAQVNNYDLNFGQILTISITATAASIGAAGIPQAGLVTMVIVLTSVGLPTDDITLIIAVDWFLDRLRTTTNVLGDSLGAGIVEHLSRHELQSGDAEMGNSVIEENEMKKPYQLVSQENELEKPIDSETKM.

The Cytoplasmic portion of the chain corresponds to 1–47 (MTKSNGEDPRAGSRMERFQQGVRQRTLLAKKKVQNITKDDVKGFLKR). Residues 48–68 (NGFVLFTVIAVVVGSILGFSV) form a helical membrane-spanning segment. Over 69 to 86 (RSYHMTFRELKYFSFPGE) the chain is Extracellular. Residues 87–108 (LLMRMLQMLVLPLIVSSLVTGM) traverse the membrane as a helical segment. Topologically, residues 109–122 (AALDSKASGKMGLR) are cytoplasmic. Residues 123–145 (AVVYYMTTTVIAVFIGIVIVIIV) form a helical membrane-spanning segment. The Extracellular segment spans residues 146–237 (HPGKGTKEHM…MREEMIPVPG (92 aa)). Asn-206 and Asn-217 each carry an N-linked (GlcNAc...) asparagine glycan. A helical membrane pass occupies residues 238–261 (AVNGVNALGLVVFSMCFGLVIGNM). At 262 to 270 (KEQGKALKD) the chain is on the cytoplasmic side. Residues 271–298 (FFDSLNEAIMRLVAVIMWYAPIGILFLI) form a helical membrane-spanning segment. The Extracellular segment spans residues 299-319 (AGKIAEMEDMGVVGGQLGMYT). The chain crosses the membrane as a helical span at residues 320-341 (VTVIIGLLIHAVIVLPLLYFAV). The Cytoplasmic segment spans residues 342–346 (TRKNP). Positions 347–377 (WVFIGGILQALITALGTSSSSATLPITFKCL) form an intramembrane region, discontinuously helical. L-aspartate is bound at residue 364–366 (SSS). Residues 378–386 (EENNKVDKR) are Cytoplasmic-facing. Residues 387 to 413 (VTRFVLPVGATINMDGTALYEALAAIF) traverse the membrane as a helical segment. Na(+) is bound by residues Gly-395, Thr-397, and Asn-399. Thr-403 is a binding site for L-aspartate. Over 414 to 426 (IAQVNNYDLNFGQ) the chain is Extracellular. The segment at residues 427–460 (ILTISITATAASIGAAGIPQAGLVTMVIVLTSVG) is an intramembrane region (discontinuously helical). Residue 444–448 (IPQAG) participates in L-aspartate binding. Over 461 to 473 (LPTDDITLIIAVD) the chain is Extracellular. Residues 474-495 (WFLDRLRTTTNVLGDSLGAGIV) traverse the membrane as a helical segment. Residues Asp-477 and Asn-484 each contribute to the L-aspartate site. Na(+)-binding residues include Asn-484 and Asp-488. Over 496-543 (EHLSRHELQSGDAEMGNSVIEENEMKKPYQLVSQENELEKPIDSETKM) the chain is Cytoplasmic. Residues 521–543 (KKPYQLVSQENELEKPIDSETKM) form a disordered region. Positions 532 to 543 (ELEKPIDSETKM) are enriched in basic and acidic residues.

This sequence belongs to the dicarboxylate/amino acid:cation symporter (DAACS) (TC 2.A.23) family. As to quaternary structure, homotrimer. As to expression, detected in retina (at protein level).

The protein resides in the cell membrane. The enzyme catalyses K(+)(in) + L-glutamate(out) + 3 Na(+)(out) + H(+)(out) = K(+)(out) + L-glutamate(in) + 3 Na(+)(in) + H(+)(in). It carries out the reaction K(+)(in) + L-aspartate(out) + 3 Na(+)(out) + H(+)(out) = K(+)(out) + L-aspartate(in) + 3 Na(+)(in) + H(+)(in). The catalysed reaction is D-aspartate(out) + K(+)(in) + 3 Na(+)(out) + H(+)(out) = D-aspartate(in) + K(+)(out) + 3 Na(+)(in) + H(+)(in). In terms of biological role, sodium-dependent, high-affinity amino acid transporter that mediates the uptake of L-glutamate and also L-aspartate and D-aspartate. Functions as a symporter that transports one amino acid molecule together with two or three Na(+) ions and one proton, in parallel with the counter-transport of one K(+) ion. Plays a redundant role in the rapid removal of released glutamate from the synaptic cleft, which is essential for terminating the postsynaptic action of glutamate. The polypeptide is Excitatory amino acid transporter 1 (SLC1A3) (Ambystoma tigrinum (Eastern tiger salamander)).